Reading from the N-terminus, the 755-residue chain is Polyribonucleotide nucleotidyltransferase (755 aa).

Mg(2+) is bound by residues Asp-493 and Asp-499. One can recognise a KH domain in the interval 560 to 619 (PRIMTIQIPVDKIGALIGPGGKTIRNICETTGAQIDIEDDGRVFITTPDGAAARQAISMI). An S1 motif domain is found at 629 to 698 (GDIFLGKVVS…TTGKISLSRR (70 aa)). The tract at residues 699-755 (AVLTGETPEERKAAGAAPRPRPREEQRGGRDEPRSLRDELRGPRREGDRPRPRRRDD) is disordered. The span at 719–755 (RPREEQRGGRDEPRSLRDELRGPRREGDRPRPRRRDD) shows a compositional bias: basic and acidic residues.

Belongs to the polyribonucleotide nucleotidyltransferase family. Mg(2+) serves as cofactor.

The protein localises to the cytoplasm. The enzyme catalyses RNA(n+1) + phosphate = RNA(n) + a ribonucleoside 5'-diphosphate. In terms of biological role, involved in mRNA degradation. Catalyzes the phosphorolysis of single-stranded polyribonucleotides processively in the 3'- to 5'-direction. This chain is Polyribonucleotide nucleotidyltransferase, found in Chloroflexus aurantiacus (strain ATCC 29366 / DSM 635 / J-10-fl).